Consider the following 300-residue polypeptide: Glycine--tRNA ligase alpha subunit (300 aa).

The protein belongs to the class-II aminoacyl-tRNA synthetase family. In terms of assembly, tetramer of two alpha and two beta subunits.

Its subcellular location is the cytoplasm. It catalyses the reaction tRNA(Gly) + glycine + ATP = glycyl-tRNA(Gly) + AMP + diphosphate. This Pseudoalteromonas translucida (strain TAC 125) protein is Glycine--tRNA ligase alpha subunit.